Reading from the N-terminus, the 293-residue chain is 33 kDa chaperonin (293 aa).

Intrachain disulfides connect Cys-237/Cys-239 and Cys-271/Cys-274.

It belongs to the HSP33 family. In terms of processing, under oxidizing conditions two disulfide bonds are formed involving the reactive cysteines. Under reducing conditions zinc is bound to the reactive cysteines and the protein is inactive.

Its subcellular location is the cytoplasm. Redox regulated molecular chaperone. Protects both thermally unfolding and oxidatively damaged proteins from irreversible aggregation. Plays an important role in the bacterial defense system toward oxidative stress. This is 33 kDa chaperonin from Haemophilus influenzae (strain 86-028NP).